The following is a 217-amino-acid chain: MDVILSTRHHSHLDSLLIETQRVLEVVFGHPVAQRPSPANAFPNPLLSPKDRRHAAGLMRINHVGEICAQGLYFGQVAVARKEELRRHLLKAAQEETDHLSWCSDRLHELESRPSLFNPLWYSSSYMLGVFAGLLGDPWSLGFVVETERQVEAHLEKHLQVLPESDARSREILRVMKVEEARHADQADHAGARLLPSPIPGAMAWAARLMKVVAYRI.

Fe cation contacts are provided by Glu66, Glu96, His99, Glu148, Glu180, and His183.

It belongs to the COQ7 family. The cofactor is Fe cation.

It localises to the cell membrane. The enzyme catalyses a 5-methoxy-2-methyl-3-(all-trans-polyprenyl)benzene-1,4-diol + AH2 + O2 = a 3-demethylubiquinol + A + H2O. It functions in the pathway cofactor biosynthesis; ubiquinone biosynthesis. Functionally, catalyzes the hydroxylation of 2-nonaprenyl-3-methyl-6-methoxy-1,4-benzoquinol during ubiquinone biosynthesis. In Xylella fastidiosa (strain 9a5c), this protein is 3-demethoxyubiquinol 3-hydroxylase.